The sequence spans 459 residues: Phosphomethylpyrimidine synthase (459 aa).

Residues Asn80, Met109, Tyr139, His175, 195–197, 236–239, and Glu275 contribute to the substrate site; these read SRG and DSLR. His279 contacts Zn(2+). Substrate is bound at residue Tyr302. Zn(2+) is bound at residue His343. [4Fe-4S] cluster-binding residues include Cys423, Cys426, and Cys431.

It belongs to the ThiC family. Requires [4Fe-4S] cluster as cofactor.

It catalyses the reaction 5-amino-1-(5-phospho-beta-D-ribosyl)imidazole + S-adenosyl-L-methionine = 4-amino-2-methyl-5-(phosphooxymethyl)pyrimidine + CO + 5'-deoxyadenosine + formate + L-methionine + 3 H(+). It participates in cofactor biosynthesis; thiamine diphosphate biosynthesis. Catalyzes the synthesis of the hydroxymethylpyrimidine phosphate (HMP-P) moiety of thiamine from aminoimidazole ribotide (AIR) in a radical S-adenosyl-L-methionine (SAM)-dependent reaction. In Prochlorococcus marinus (strain MIT 9211), this protein is Phosphomethylpyrimidine synthase.